Reading from the N-terminus, the 465-residue chain is Cysteine--tRNA ligase (465 aa).

Cys27 provides a ligand contact to Zn(2+). Positions 29–39 (PTVYDDAHLGH) match the 'HIGH' region motif. Zn(2+)-binding residues include Cys207, His237, and Glu241. Positions 269 to 273 (KMSKS) match the 'KMSKS' region motif. Residue Lys272 participates in ATP binding.

The protein belongs to the class-I aminoacyl-tRNA synthetase family. Monomer. It depends on Zn(2+) as a cofactor.

It is found in the cytoplasm. The catalysed reaction is tRNA(Cys) + L-cysteine + ATP = L-cysteinyl-tRNA(Cys) + AMP + diphosphate. The sequence is that of Cysteine--tRNA ligase (cysS) from Helicobacter pylori (strain J99 / ATCC 700824) (Campylobacter pylori J99).